The primary structure comprises 294 residues: Probable endonuclease 4 (294 aa).

Residues His-78, His-118, Glu-155, Asp-189, His-192, His-226, Asp-239, His-241, and Glu-271 each coordinate Zn(2+).

This sequence belongs to the AP endonuclease 2 family. The cofactor is Zn(2+).

It carries out the reaction Endonucleolytic cleavage to 5'-phosphooligonucleotide end-products.. Functionally, endonuclease IV plays a role in DNA repair. It cleaves phosphodiester bonds at apurinic or apyrimidinic (AP) sites, generating a 3'-hydroxyl group and a 5'-terminal sugar phosphate. The chain is Probable endonuclease 4 from Oleidesulfovibrio alaskensis (strain ATCC BAA-1058 / DSM 17464 / G20) (Desulfovibrio alaskensis).